Reading from the N-terminus, the 627-residue chain is (-)-alpha-pinene synthase 2, chloroplastic (627 aa).

A chloroplast-targeting transit peptide spans 1-36 (MALVSIAPLASKSCLHKSLSSSAHELKTICRTIPTL). Residues Asp378, Asp382, and Asp530 each contribute to the Mg(2+) site. The DDXXD motif signature appears at 378-382 (DDMYD).

It belongs to the terpene synthase family. Tpsd subfamily. The cofactor is Mg(2+). Mn(2+) is required as a cofactor.

The protein localises to the plastid. It is found in the chloroplast. The catalysed reaction is (2E)-geranyl diphosphate = (1S,5S)-beta-pinene + diphosphate. It carries out the reaction (2E)-geranyl diphosphate = (1S,5S)-alpha-pinene + diphosphate. The protein operates within terpene metabolism; oleoresin biosynthesis. Terpene synthase (TPS) involved in the biosynthesis of monoterpene natural products included in conifer oleoresin secretions and volatile emissions; these compounds contribute to biotic and abiotic stress defense against herbivores and pathogens. Catalyzes the conversion of (2E)-geranyl diphosphate (GPP) to (1S,5S)-beta-pinene. This is (-)-alpha-pinene synthase 2, chloroplastic from Picea glauca (White spruce).